Consider the following 307-residue polypeptide: Leucine-rich repeat-containing protein 59 (307 aa).

Met-1 is modified (N-acetylmethionine). N-acetylthreonine; in Leucine-rich repeat-containing protein 59, N-terminally processed is present on Thr-2. At 2–244 the chain is on the cytoplasmic side; it reads TKTGSKGGNL…KPPPRKHNRS (243 aa). LRR repeat units follow at residues 10–31, 40–62, 63–84, 86–107, and 109–128; these read NLRD…NEVP, KATV…CGLT, HLVK…FGRL, NLQH…FAQL, and NLKW…AKVA. Phosphoserine is present on residues Ser-23 and Ser-25. Position 73 is an N6-succinyllysine (Lys-73). Lys-135 carries the post-translational modification N6-acetyllysine. Positions 148 to 216 form a coiled coil; the sequence is MKAVQADQER…KASKREQEKK (69 aa). Positions 150-242 are disordered; sequence AVQADQERER…PRKPPPRKHN (93 aa). Residues 154 to 221 are compositionally biased toward basic and acidic residues; sequence DQERERQRRL…EQEKKPKKET (68 aa). Basic residues predominate over residues 229-242; the sequence is SGSRPRKPPPRKHN. A helical transmembrane segment spans residues 245–265; it reads WAVLKGLLLLLLLCVAGGLVV. Residues 266 to 307 lie on the Lumenal side of the membrane; the sequence is CRVTGLQQQPLCTSVNAIYDNAVQGLRHHEILQWVLQTDSQQ.

Can form homodimers. Interacts with SGO1. Interacts with FGF1.

The protein localises to the microsome membrane. The protein resides in the endoplasmic reticulum membrane. It is found in the nucleus envelope. Its function is as follows. Required for nuclear import of FGF1, but not that of FGF2. Might regulate nuclear import of exogenous FGF1 by facilitating interaction with the nuclear import machinery and by transporting cytosolic FGF1 to, and possibly through, the nuclear pores. This chain is Leucine-rich repeat-containing protein 59 (Lrrc59), found in Rattus norvegicus (Rat).